Consider the following 409-residue polypeptide: Serine/threonine transporter SstT (409 aa).

Helical transmembrane passes span 14 to 34 (GSLV…ATLS), 48 to 68 (FVGA…AASI), 82 to 102 (IVIL…LMSF), 141 to 161 (ALMT…GLAL), 192 to 212 (IGIF…AIAG), 216 to 236 (LLLV…PAIV), 290 to 310 (IPLG…ILTL), 322 to 342 (ILTA…ASGV), and 357 to 377 (FGIS…IGVI).

The protein belongs to the dicarboxylate/amino acid:cation symporter (DAACS) (TC 2.A.23) family.

It is found in the cell inner membrane. The enzyme catalyses L-serine(in) + Na(+)(in) = L-serine(out) + Na(+)(out). It carries out the reaction L-threonine(in) + Na(+)(in) = L-threonine(out) + Na(+)(out). Involved in the import of serine and threonine into the cell, with the concomitant import of sodium (symport system). This Shewanella woodyi (strain ATCC 51908 / MS32) protein is Serine/threonine transporter SstT.